Here is a 171-residue protein sequence, read N- to C-terminus: Co-chaperone protein HscB homolog (171 aa).

The region spanning 2–69 is the J domain; that stretch reads NHFELFDLPV…DSRAAYLLSL (68 aa).

Belongs to the HscB family. Interacts with HscA and stimulates its ATPase activity.

Functionally, co-chaperone involved in the maturation of iron-sulfur cluster-containing proteins. Seems to help targeting proteins to be folded toward HscA. This chain is Co-chaperone protein HscB homolog, found in Acinetobacter baylyi (strain ATCC 33305 / BD413 / ADP1).